Here is a 1066-residue protein sequence, read N- to C-terminus: UPF0182 protein BL1029 (1066 aa).

The segment at 12–74 (GNGGDSRRNN…KPASGGSGGS (63 aa)) is disordered. A compositionally biased stretch (low complexity) spans 44-61 (NAGPSGSSRPPRGPANPR). Transmembrane regions (helical) follow at residues 77 to 97 (SKIL…FFGL), 126 to 146 (LWVA…WLAI), 179 to 199 (VAVV…NANW), 235 to 255 (VLAA…VTHV), 282 to 302 (LGIW…IGVF), 326 to 346 (VTFI…IWLM), and 372 to 392 (VTSI…WPVL). Residues 977–1044 (DSGAAAGDAE…SQSAMKNGDW (68 aa)) form a disordered region. Residues 989–998 (SGDQSGSDTN) are compositionally biased toward polar residues. Residues 1003-1016 (GTTDGKSDSGSSSD) are compositionally biased toward low complexity.

It belongs to the UPF0182 family.

Its subcellular location is the cell membrane. In Bifidobacterium longum (strain NCC 2705), this protein is UPF0182 protein BL1029.